A 218-amino-acid chain; its full sequence is Octanoyltransferase (218 aa).

A BPL/LPL catalytic domain is found at 30 to 213 (GEIEDTLILV…YFSEVFNYDI (184 aa)). Substrate is bound by residues 75 to 82 (RGGDVTYH), 143 to 145 (AIG), and 156 to 158 (GFA). The Acyl-thioester intermediate role is filled by C174.

The protein belongs to the LipB family.

The protein resides in the cytoplasm. The enzyme catalyses octanoyl-[ACP] + L-lysyl-[protein] = N(6)-octanoyl-L-lysyl-[protein] + holo-[ACP] + H(+). The protein operates within protein modification; protein lipoylation via endogenous pathway; protein N(6)-(lipoyl)lysine from octanoyl-[acyl-carrier-protein]: step 1/2. Functionally, catalyzes the transfer of endogenously produced octanoic acid from octanoyl-acyl-carrier-protein onto the lipoyl domains of lipoate-dependent enzymes. Lipoyl-ACP can also act as a substrate although octanoyl-ACP is likely to be the physiological substrate. The sequence is that of Octanoyltransferase from Alkaliphilus metalliredigens (strain QYMF).